We begin with the raw amino-acid sequence, 741 residues long: Linoleate 9S-lipoxygenase (741 aa).

Residues 1 to 53 (IPGAFYIKNFMQVEFYLKSLTLEDIPNHGTIHFICNSWIYNSKVYKSDRIFFA) enclose the PLAT domain. One can recognise a Lipoxygenase domain in the interval 56–741 (TYLPSETPAP…SEEGLTFRGI (686 aa)). A disordered region spans residues 108-144 (ALARPVLGGSTLPYPRRGRTGRPKTKKDPNSEKPSDF). Basic residues predominate over residues 123 to 132 (RRGRTGRPKT). A compositionally biased stretch (basic and acidic residues) spans 133 to 144 (KKDPNSEKPSDF). His407, His412, His598, and Asn602 together coordinate Fe cation.

It belongs to the lipoxygenase family. As to quaternary structure, monomer. Fe cation serves as cofactor.

The protein resides in the cytoplasm. It catalyses the reaction (9Z,12Z)-octadecadienoate + O2 = (9S)-hydroperoxy-(10E,12Z)-octadecadienoate. The catalysed reaction is (9Z,12Z)-octadecadienoate + O2 = (13S)-hydroperoxy-(9Z,11E)-octadecadienoate. It carries out the reaction (9Z,12Z,15Z)-octadecatrienoate + O2 = (13S)-hydroperoxy-(9Z,11E,15Z)-octadecatrienoate. It functions in the pathway lipid metabolism; oxylipin biosynthesis. Its function is as follows. Plant lipoxygenase may be involved in a number of diverse aspects of plant physiology including growth and development, pest resistance, and senescence or responses to wounding. It catalyzes the hydroperoxidation of lipids containing a cis,cis-1,4-pentadiene structure. The sequence is that of Linoleate 9S-lipoxygenase from Phaseolus vulgaris (Kidney bean).